The chain runs to 473 residues: Photosystem II CP43 reaction center protein (473 aa).

Positions 1 to 14 are excised as a propeptide; that stretch reads MKTLYSLRRSYPVE. Thr-15 is subject to N-acetylthreonine. Residue Thr-15 is modified to Phosphothreonine. The next 5 helical transmembrane spans lie at 69–93, 134–155, 178–200, 255–275, and 291–312; these read LFEV…PHLA, LIGP…KDRN, KALY…RKIT, KPFA…LSYS, and WFNN…ASQA. Glu-367 contacts [CaMn4O5] cluster. A helical transmembrane segment spans residues 447 to 471; it reads RARAAAAGFEKGIDRDFEPVLSMTP.

Belongs to the PsbB/PsbC family. PsbC subfamily. In terms of assembly, PSII is composed of 1 copy each of membrane proteins PsbA, PsbB, PsbC, PsbD, PsbE, PsbF, PsbH, PsbI, PsbJ, PsbK, PsbL, PsbM, PsbT, PsbX, PsbY, PsbZ, Psb30/Ycf12, at least 3 peripheral proteins of the oxygen-evolving complex and a large number of cofactors. It forms dimeric complexes. Binds multiple chlorophylls and provides some of the ligands for the Ca-4Mn-5O cluster of the oxygen-evolving complex. It may also provide a ligand for a Cl- that is required for oxygen evolution. PSII binds additional chlorophylls, carotenoids and specific lipids. is required as a cofactor.

It localises to the plastid. Its subcellular location is the chloroplast thylakoid membrane. In terms of biological role, one of the components of the core complex of photosystem II (PSII). It binds chlorophyll and helps catalyze the primary light-induced photochemical processes of PSII. PSII is a light-driven water:plastoquinone oxidoreductase, using light energy to abstract electrons from H(2)O, generating O(2) and a proton gradient subsequently used for ATP formation. This chain is Photosystem II CP43 reaction center protein, found in Pinus koraiensis (Korean pine).